Consider the following 421-residue polypeptide: Inner membrane protein YihN (421 aa).

At 1–44 (MLTKKKWALFSLLTLCGGTIYKLPSLKDAFYIPMQEYFHLTNGQ) the chain is on the periplasmic side. The helical transmembrane segment at 45 to 65 (IGNAMSVNSFVTTVGFFLSIY) threads the bilayer. Over 66–73 (FADKLPRR) the chain is Cytoplasmic. The helical transmembrane segment at 74–91 (YTMSFSLIATGLLGVYLT) threads the bilayer. Residues 92–95 (TMPG) lie on the Periplasmic side of the membrane. The chain crosses the membrane as a helical span at residues 96 to 118 (YWGILFVWALFGVTCDMMNWPVL). Over 119–146 (LKSVSRLGNSEQQGRLFGFFETGRGIVD) the chain is Cytoplasmic. A helical transmembrane segment spans residues 147 to 167 (TVVAFSALAVFTWFGSGLLGF). Lys-168 is a topological domain (periplasmic). The helical transmembrane segment at 169-189 (AGIWFYSLIVIAVGIIIFFVL) threads the bilayer. Over 190 to 220 (NDKEEAPSVEVKKEDGASKNTSMTSVLKDKT) the chain is Cytoplasmic. The next 2 helical transmembrane spans lie at 221-241 (IWLI…LTFF) and 242-262 (IPFL…YGII). Topologically, residues 263 to 288 (NQYCLKMIGGPIGGMISDKILKSPSK) are cytoplasmic. The next 2 membrane-spanning stretches (helical) occupy residues 289–309 (YLCY…MLPH) and 310–330 (ESMP…IVFT). At 331-354 (QRAVFFAPIGEAKIAENKTGAAMA) the chain is on the cytoplasmic side. A helical transmembrane segment spans residues 355-375 (LGSFIGYAPAMFCFSLYGYIL). The Periplasmic portion of the chain corresponds to 376–385 (DLNPGIIGYK). The helical transmembrane segment at 386–406 (IVFGIMACFAFSGAVVSVMLV) threads the bilayer. The Cytoplasmic segment spans residues 407 to 421 (KRISQRKKEMLAAEA).

It belongs to the major facilitator superfamily.

The protein resides in the cell inner membrane. The protein is Inner membrane protein YihN (yihN) of Escherichia coli (strain K12).